A 491-amino-acid chain; its full sequence is 1-aminocyclopropane-1-carboxylate synthase (491 aa).

Position 278 is an N6-(pyridoxal phosphate)lysine (Lys-278).

Belongs to the class-I pyridoxal-phosphate-dependent aminotransferase family. As to quaternary structure, homodimer. It depends on pyridoxal 5'-phosphate as a cofactor.

The enzyme catalyses S-adenosyl-L-methionine = 1-aminocyclopropane-1-carboxylate + S-methyl-5'-thioadenosine + H(+). It functions in the pathway alkene biosynthesis; ethylene biosynthesis via S-adenosyl-L-methionine; ethylene from S-adenosyl-L-methionine: step 1/2. Functionally, catalyzes the formation of 1-aminocyclopropane-1-carboxylate, a direct precursor of ethylene in higher plants. The chain is 1-aminocyclopropane-1-carboxylate synthase (ACS1) from Nicotiana tabacum (Common tobacco).